A 366-amino-acid polypeptide reads, in one-letter code: Chorismate synthase (366 aa).

Arginine 47 serves as a coordination point for NADP(+). FMN-binding positions include 124–126 (RSS), glycine 286, 301–305 (KPVAT), and arginine 327.

This sequence belongs to the chorismate synthase family. As to quaternary structure, homotetramer. Requires FMNH2 as cofactor.

The catalysed reaction is 5-O-(1-carboxyvinyl)-3-phosphoshikimate = chorismate + phosphate. Its pathway is metabolic intermediate biosynthesis; chorismate biosynthesis; chorismate from D-erythrose 4-phosphate and phosphoenolpyruvate: step 7/7. Its function is as follows. Catalyzes the anti-1,4-elimination of the C-3 phosphate and the C-6 proR hydrogen from 5-enolpyruvylshikimate-3-phosphate (EPSP) to yield chorismate, which is the branch point compound that serves as the starting substrate for the three terminal pathways of aromatic amino acid biosynthesis. This reaction introduces a second double bond into the aromatic ring system. The polypeptide is Chorismate synthase (Methylacidiphilum infernorum (isolate V4) (Methylokorus infernorum (strain V4))).